We begin with the raw amino-acid sequence, 76 residues long: Endothelin-1 (76 aa).

The tract at residues 30-44 (CQCASQKDKKCWNFC) is endothelin-like.

Belongs to the endothelin/sarafotoxin family.

Its subcellular location is the secreted. Endothelins are endothelium-derived vasoconstrictor peptides. Probable ligand for G-protein coupled receptors EDNRA and EDNRB which activates PTK2B, BCAR1, BCAR3 and, GTPases RAP1 and RHOA cascade in glomerular mesangial cells. Also binds the DEAR/FBXW7-AS1 receptor. Promotes mesenteric arterial wall remodeling via activation of ROCK signaling and subsequent colocalization of NFATC3 with F-actin filaments. NFATC3 then translocates to the nucleus where it subsequently promotes the transcription of the smooth muscle hypertrophy and differentiation marker ACTA2. The polypeptide is Endothelin-1 (EDN1) (Macaca fascicularis (Crab-eating macaque)).